Here is a 333-residue protein sequence, read N- to C-terminus: Nucleoid-associated protein VV1_3120 (333 aa).

It belongs to the YejK family.

The protein localises to the cytoplasm. It is found in the nucleoid. This Vibrio vulnificus (strain CMCP6) protein is Nucleoid-associated protein VV1_3120.